The sequence spans 415 residues: DNA primase DnaG (415 aa).

The 80-residue stretch at 171–250 (DAIIIVEGRA…AFSPRGKSVE (80 aa)) folds into the Toprim domain. Mg(2+) contacts are provided by E177, D219, and D221. The tract at residues 280-323 (ELPGDLGGRPARTAPAHDEGGNSDTTGKQAVSQKRIRDGTSKVP) is disordered. The segment covering 301–311 (NSDTTGKQAVS) has biased composition (polar residues).

This sequence belongs to the archaeal DnaG primase family. As to quaternary structure, forms a ternary complex with MCM helicase and DNA. Mg(2+) serves as cofactor.

The catalysed reaction is ssDNA + n NTP = ssDNA/pppN(pN)n-1 hybrid + (n-1) diphosphate.. Functionally, RNA polymerase that catalyzes the synthesis of short RNA molecules used as primers for DNA polymerase during DNA replication. The chain is DNA primase DnaG from Methanoregula boonei (strain DSM 21154 / JCM 14090 / 6A8).